Here is a 440-residue protein sequence, read N- to C-terminus: Transposon Ty1-JR2 Gag polyprotein (440 aa).

A compositionally biased stretch (low complexity) spans 1–16; that stretch reads MESQQLSQHSHISHGS. Disordered regions lie at residues 1-93, 126-173, and 352-440; these read MESQ…MMTQ, PQSQ…RPPP, and GSRN…PETY. Composition is skewed to polar residues over residues 48 to 60, 71 to 93, and 127 to 152; these read TKANSQQTTTPAS, SPQTAQSHSPQNGPYPQQCMMTQ, and QSQFPQYPSSVGTPLSTPSPESGNTF. Low complexity predominate over residues 153-165; the sequence is TDSSSADSDMTST. The segment at 299-401 is RNA-binding; it reads NNGIHINNKV…NSKSKTARAH (103 aa). Over residues 402-418 the composition is skewed to low complexity; the sequence is NVSTSNNSPSTDNDSIS. Serine 416 carries the post-translational modification Phosphoserine. Residues 419-428 are compositionally biased toward polar residues; sequence KSTTEPIQLN. Residues 429–440 show a composition bias toward basic and acidic residues; the sequence is NKHDLHLRPETY.

As to quaternary structure, homotrimer.

Its subcellular location is the cytoplasm. Functionally, capsid protein (CA) is the structural component of the virus-like particle (VLP), forming the shell that encapsulates the retrotransposons dimeric RNA genome. The particles are assembled from trimer-clustered units and there are holes in the capsid shells that allow for the diffusion of macromolecules. CA also has nucleocapsid-like chaperone activity, promoting primer tRNA(i)-Met annealing to the multipartite primer-binding site (PBS), dimerization of Ty1 RNA and initiation of reverse transcription. The sequence is that of Transposon Ty1-JR2 Gag polyprotein (TY1A-JR2) from Saccharomyces cerevisiae (strain ATCC 204508 / S288c) (Baker's yeast).